A 948-amino-acid polypeptide reads, in one-letter code: Isoleucine--tRNA ligase (948 aa).

A 'HIGH' region motif is present at residues 58-68 (PYANGSIHIGH). Glu-572 serves as a coordination point for L-isoleucyl-5'-AMP. Positions 613 to 617 (KMSKS) match the 'KMSKS' region motif. Lys-616 contributes to the ATP binding site. The Zn(2+) site is built by Cys-911, Cys-914, Cys-931, and Cys-934.

It belongs to the class-I aminoacyl-tRNA synthetase family. IleS type 1 subfamily. Monomer. Zn(2+) serves as cofactor.

Its subcellular location is the cytoplasm. The catalysed reaction is tRNA(Ile) + L-isoleucine + ATP = L-isoleucyl-tRNA(Ile) + AMP + diphosphate. Functionally, catalyzes the attachment of isoleucine to tRNA(Ile). As IleRS can inadvertently accommodate and process structurally similar amino acids such as valine, to avoid such errors it has two additional distinct tRNA(Ile)-dependent editing activities. One activity is designated as 'pretransfer' editing and involves the hydrolysis of activated Val-AMP. The other activity is designated 'posttransfer' editing and involves deacylation of mischarged Val-tRNA(Ile). This Edwardsiella ictaluri (strain 93-146) protein is Isoleucine--tRNA ligase.